Reading from the N-terminus, the 303-residue chain is Signal recognition particle receptor FtsY (303 aa).

GTP-binding positions include 108–115, 190–194, and 254–257; these read GVNGVGKT, DTAGR, and TKLD.

It belongs to the GTP-binding SRP family. FtsY subfamily. In terms of assembly, part of the signal recognition particle protein translocation system, which is composed of SRP and FtsY. SRP is a ribonucleoprotein composed of Ffh and a 4.5S RNA molecule.

It is found in the cell inner membrane. The protein resides in the cytoplasm. The catalysed reaction is GTP + H2O = GDP + phosphate + H(+). In terms of biological role, involved in targeting and insertion of nascent membrane proteins into the cytoplasmic membrane. Acts as a receptor for the complex formed by the signal recognition particle (SRP) and the ribosome-nascent chain (RNC). Interaction with SRP-RNC leads to the transfer of the RNC complex to the Sec translocase for insertion into the membrane, the hydrolysis of GTP by both Ffh and FtsY, and the dissociation of the SRP-FtsY complex into the individual components. The protein is Signal recognition particle receptor FtsY of Rickettsia prowazekii (strain Madrid E).